An 82-amino-acid polypeptide reads, in one-letter code: uncharacterized protein (82 aa).

This is an uncharacterized protein from Anabaena cylindrica.